The sequence spans 128 residues: Sulfurtransferase TusD (128 aa).

The active-site Cysteine persulfide intermediate is cysteine 78.

It belongs to the DsrE/TusD family. Heterohexamer, formed by a dimer of trimers. The hexameric TusBCD complex contains 2 copies each of TusB, TusC and TusD. The TusBCD complex interacts with TusE.

Its subcellular location is the cytoplasm. Part of a sulfur-relay system required for 2-thiolation of 5-methylaminomethyl-2-thiouridine (mnm(5)s(2)U) at tRNA wobble positions. Accepts sulfur from TusA and transfers it in turn to TusE. This chain is Sulfurtransferase TusD, found in Klebsiella pneumoniae subsp. pneumoniae (strain ATCC 700721 / MGH 78578).